Here is a 283-residue protein sequence, read N- to C-terminus: Ribosomal RNA small subunit methyltransferase A (283 aa).

The S-adenosyl-L-methionine site is built by Asn22, Leu24, Gly49, Glu70, and Asn113.

It belongs to the class I-like SAM-binding methyltransferase superfamily. rRNA adenine N(6)-methyltransferase family. RsmA subfamily.

It localises to the cytoplasm. The enzyme catalyses adenosine(1518)/adenosine(1519) in 16S rRNA + 4 S-adenosyl-L-methionine = N(6)-dimethyladenosine(1518)/N(6)-dimethyladenosine(1519) in 16S rRNA + 4 S-adenosyl-L-homocysteine + 4 H(+). Its function is as follows. Specifically dimethylates two adjacent adenosines (A1518 and A1519) in the loop of a conserved hairpin near the 3'-end of 16S rRNA in the 30S particle. May play a critical role in biogenesis of 30S subunits. This chain is Ribosomal RNA small subunit methyltransferase A, found in Myxococcus xanthus (strain DK1622).